The chain runs to 554 residues: Dihydroxy-acid dehydratase (554 aa).

Asp78 contributes to the Mg(2+) binding site. A [2Fe-2S] cluster-binding site is contributed by Cys119. Mg(2+)-binding residues include Asp120 and Lys121. An N6-carboxylysine modification is found at Lys121. Residue Cys191 participates in [2Fe-2S] cluster binding. Glu442 provides a ligand contact to Mg(2+). Ser468 serves as the catalytic Proton acceptor.

Belongs to the IlvD/Edd family. Homodimer. [2Fe-2S] cluster serves as cofactor. The cofactor is Mg(2+).

The catalysed reaction is (2R)-2,3-dihydroxy-3-methylbutanoate = 3-methyl-2-oxobutanoate + H2O. It catalyses the reaction (2R,3R)-2,3-dihydroxy-3-methylpentanoate = (S)-3-methyl-2-oxopentanoate + H2O. The protein operates within amino-acid biosynthesis; L-isoleucine biosynthesis; L-isoleucine from 2-oxobutanoate: step 3/4. It participates in amino-acid biosynthesis; L-valine biosynthesis; L-valine from pyruvate: step 3/4. Functions in the biosynthesis of branched-chain amino acids. Catalyzes the dehydration of (2R,3R)-2,3-dihydroxy-3-methylpentanoate (2,3-dihydroxy-3-methylvalerate) into 2-oxo-3-methylpentanoate (2-oxo-3-methylvalerate) and of (2R)-2,3-dihydroxy-3-methylbutanoate (2,3-dihydroxyisovalerate) into 2-oxo-3-methylbutanoate (2-oxoisovalerate), the penultimate precursor to L-isoleucine and L-valine, respectively. This chain is Dihydroxy-acid dehydratase, found in Acetivibrio thermocellus (strain ATCC 27405 / DSM 1237 / JCM 9322 / NBRC 103400 / NCIMB 10682 / NRRL B-4536 / VPI 7372) (Clostridium thermocellum).